We begin with the raw amino-acid sequence, 184 residues long: 3-hydroxydecanoyl-[acyl-carrier-protein] dehydratase (184 aa).

Histidine 77 is an active-site residue.

Belongs to the thioester dehydratase family. FabA subfamily. Homodimer.

Its subcellular location is the cytoplasm. The enzyme catalyses a (3R)-hydroxyacyl-[ACP] = a (2E)-enoyl-[ACP] + H2O. It carries out the reaction (3R)-hydroxydecanoyl-[ACP] = (2E)-decenoyl-[ACP] + H2O. The catalysed reaction is (2E)-decenoyl-[ACP] = (3Z)-decenoyl-[ACP]. The protein operates within lipid metabolism; fatty acid biosynthesis. Its function is as follows. Necessary for the introduction of cis unsaturation into fatty acids. Catalyzes the dehydration of (3R)-3-hydroxydecanoyl-ACP to E-(2)-decenoyl-ACP and then its isomerization to Z-(3)-decenoyl-ACP. Can catalyze the dehydratase reaction for beta-hydroxyacyl-ACPs with saturated chain lengths up to 16:0, being most active on intermediate chain length. In Hyphomonas neptunium (strain ATCC 15444), this protein is 3-hydroxydecanoyl-[acyl-carrier-protein] dehydratase.